Here is a 308-residue protein sequence, read N- to C-terminus: Probable lipid phosphate phosphatase 4 (308 aa).

The next 6 membrane-spanning stretches (helical) occupy residues 26–46, 66–86, 93–113, 162–182, 193–213, and 226–246; these read WLIL…EPFH, IPMW…FIVY, VYDL…TGVT, SFPS…AWYL, GHVA…LIGI, and VFAG…HFFP. The segment at 274-308 is disordered; sequence MTRTGSRGMLGNDVEPGNSASSPHDRHRESTDSDF. A compositionally biased stretch (basic and acidic residues) spans 296 to 308; that stretch reads PHDRHRESTDSDF.

It belongs to the PA-phosphatase related phosphoesterase family.

Its subcellular location is the membrane. This chain is Probable lipid phosphate phosphatase 4 (LPP4), found in Arabidopsis thaliana (Mouse-ear cress).